Here is a 262-residue protein sequence, read N- to C-terminus: Small ribosomal subunit protein eS1 (262 aa).

Belongs to the eukaryotic ribosomal protein eS1 family. As to quaternary structure, component of the small ribosomal subunit. Mature ribosomes consist of a small (40S) and a large (60S) subunit. The 40S subunit contains about 33 different proteins and 1 molecule of RNA (18S). The 60S subunit contains about 49 different proteins and 3 molecules of RNA (25S, 5.8S and 5S).

The protein resides in the cytoplasm. This Plasmodium vivax (strain Salvador I) protein is Small ribosomal subunit protein eS1.